A 107-amino-acid polypeptide reads, in one-letter code: UPF0145 protein PC1_1703 (107 aa).

This sequence belongs to the UPF0145 family.

This Pectobacterium carotovorum subsp. carotovorum (strain PC1) protein is UPF0145 protein PC1_1703.